A 487-amino-acid polypeptide reads, in one-letter code: Glutamyl-tRNA(Gln) amidotransferase subunit A (487 aa).

Active-site charge relay system residues include lysine 77 and serine 152. The active-site Acyl-ester intermediate is serine 176.

It belongs to the amidase family. GatA subfamily. As to quaternary structure, heterotrimer of A, B and C subunits.

The catalysed reaction is L-glutamyl-tRNA(Gln) + L-glutamine + ATP + H2O = L-glutaminyl-tRNA(Gln) + L-glutamate + ADP + phosphate + H(+). Its function is as follows. Allows the formation of correctly charged Gln-tRNA(Gln) through the transamidation of misacylated Glu-tRNA(Gln) in organisms which lack glutaminyl-tRNA synthetase. The reaction takes place in the presence of glutamine and ATP through an activated gamma-phospho-Glu-tRNA(Gln). The polypeptide is Glutamyl-tRNA(Gln) amidotransferase subunit A (Lactiplantibacillus plantarum (strain ATCC BAA-793 / NCIMB 8826 / WCFS1) (Lactobacillus plantarum)).